Here is a 31-residue protein sequence, read N- to C-terminus: Cyclotide mech-4 (31 aa).

A cross-link (cyclopeptide (Gly-Asp)) is located at residues G1–D31. 3 cysteine pairs are disulfide-bonded: C5–C21, C9–C23, and C14–C28.

This is a cyclic peptide. In terms of processing, contains 3 disulfide bonds.

Probably participates in a plant defense mechanism (Potential). Binds to and induces leakage in phospholipd membranes, particularly ones containing 1-palmitoyl-2-oleophosphatidylethanolamine (POPE). This chain is Cyclotide mech-4, found in Melicytus chathamicus (Chatham Island mahoe).